The chain runs to 729 residues: Polyribonucleotide nucleotidyltransferase (729 aa).

Mg(2+) is bound by residues Asp-510 and Asp-516. The KH domain maps to 576 to 635; it reads PRVISVKIPVDKIGEVIGPKGKMINQIQADSGAEITVEDDGTIYIGAADGTSAETARSAI. The 73-residue stretch at 647-719 folds into the S1 motif domain; it reads GERYLGTIVK…ARGKISLSPS (73 aa).

It belongs to the polyribonucleotide nucleotidyltransferase family. Mg(2+) is required as a cofactor.

The protein localises to the cytoplasm. The enzyme catalyses RNA(n+1) + phosphate = RNA(n) + a ribonucleoside 5'-diphosphate. Functionally, involved in mRNA degradation. Catalyzes the phosphorolysis of single-stranded polyribonucleotides processively in the 3'- to 5'-direction. This chain is Polyribonucleotide nucleotidyltransferase, found in Frankia alni (strain DSM 45986 / CECT 9034 / ACN14a).